A 348-amino-acid chain; its full sequence is Histidinol-phosphate aminotransferase (348 aa).

N6-(pyridoxal phosphate)lysine is present on lysine 210.

Belongs to the class-II pyridoxal-phosphate-dependent aminotransferase family. Histidinol-phosphate aminotransferase subfamily. In terms of assembly, homodimer. Requires pyridoxal 5'-phosphate as cofactor.

The enzyme catalyses L-histidinol phosphate + 2-oxoglutarate = 3-(imidazol-4-yl)-2-oxopropyl phosphate + L-glutamate. It participates in amino-acid biosynthesis; L-histidine biosynthesis; L-histidine from 5-phospho-alpha-D-ribose 1-diphosphate: step 7/9. In Cytophaga hutchinsonii (strain ATCC 33406 / DSM 1761 / CIP 103989 / NBRC 15051 / NCIMB 9469 / D465), this protein is Histidinol-phosphate aminotransferase.